The following is a 246-amino-acid chain: UDP-2,3-diacylglucosamine hydrolase (246 aa).

The Mn(2+) site is built by D8, H10, D41, N79, and H114. 79–80 serves as a coordination point for substrate; sequence NR. The substrate site is built by D122, S160, K164, K167, and H195. Mn(2+)-binding residues include H195 and H197.

The protein belongs to the LpxH family. It depends on Mn(2+) as a cofactor.

The protein localises to the cell inner membrane. It carries out the reaction UDP-2-N,3-O-bis[(3R)-3-hydroxytetradecanoyl]-alpha-D-glucosamine + H2O = 2-N,3-O-bis[(3R)-3-hydroxytetradecanoyl]-alpha-D-glucosaminyl 1-phosphate + UMP + 2 H(+). It participates in glycolipid biosynthesis; lipid IV(A) biosynthesis; lipid IV(A) from (3R)-3-hydroxytetradecanoyl-[acyl-carrier-protein] and UDP-N-acetyl-alpha-D-glucosamine: step 4/6. In terms of biological role, hydrolyzes the pyrophosphate bond of UDP-2,3-diacylglucosamine to yield 2,3-diacylglucosamine 1-phosphate (lipid X) and UMP by catalyzing the attack of water at the alpha-P atom. Involved in the biosynthesis of lipid A, a phosphorylated glycolipid that anchors the lipopolysaccharide to the outer membrane of the cell. This is UDP-2,3-diacylglucosamine hydrolase from Tolumonas auensis (strain DSM 9187 / NBRC 110442 / TA 4).